The following is a 2803-amino-acid chain: Microtubule-associated protein 1A (2803 aa).

5 positions are modified to phosphoserine: Ser-114, Ser-117, Ser-118, Ser-121, and Ser-155. Tyr-177 is modified (phosphotyrosine). Disordered stretches follow at residues 302–466 and 486–516; these read GAVP…DLKP and IDRSRAIRGEKELSSEPQTPPAQKGTVPLPT. Ser-319, Ser-322, and Ser-384 each carry phosphoserine. Basic and acidic residues predominate over residues 335 to 390; the sequence is AKREEVVEEGAKEARSELAKELAKTEKKAKESSEKPPEKPAKPERVKTESSEALKA. The segment covering 391-406 has biased composition (basic residues); sequence EKRKLIKDKVGKKHLK. Basic and acidic residues-rich tracts occupy residues 407 to 464 and 486 to 499; these read EKIS…KPDL and IDRSRAIRGEKELS. A run of 8 repeats spans residues 415 to 417, 420 to 422, 427 to 429, 431 to 433, 436 to 438, 440 to 442, 444 to 446, and 449 to 451. The segment at 415–541 is 9 X 3 AA repeats of K-K-[DE]; the sequence is KKDKEKKEIK…TQDFEEMKRE (127 aa). Residue Thr-504 is modified to Phosphothreonine. Phosphoserine occurs at positions 526 and 527. Repeat unit 9 spans residues 539-541; it reads KRE. Composition is skewed to basic and acidic residues over residues 539–554 and 585–596; these read KREERALLAEQRDTGL and QEEHVMKEKELV. 5 disordered regions span residues 539–712, 734–806, 847–1080, 1109–1548, and 1573–1605; these read KREE…KAPE, YIQD…GTPE, EDQS…VNID, TGPI…EKKD, and EENHQTQEQESLVQEDKTRKPKMLEEKSPEKVK. Phosphoserine is present on residues Ser-605 and Ser-612. Thr-616 bears the Phosphothreonine mark. Basic and acidic residues predominate over residues 623–667; that stretch reads WEEKKQREAERLPDRTEAREESEPEVKEDVIEKAELEEMEEVHPS. Ser-644, Ser-667, and Ser-787 each carry phosphoserine. Composition is skewed to polar residues over residues 847–860 and 871–883; these read EDQSVASLTAPQTE and TVTSIPSSRTEAT. Residues Ser-874, Ser-877, Ser-878, and Ser-891 each carry the phosphoserine modification. Thr-894 is modified (phosphothreonine). 9 positions are modified to phosphoserine: Ser-896, Ser-900, Ser-909, Ser-986, Ser-996, Ser-1004, Ser-1013, Ser-1019, and Ser-1029. Basic and acidic residues predominate over residues 1031–1065; sequence GDTKRTPGVGKEDAAEETVKPGPEEGTLEKEEKVP. 12 positions are modified to phosphoserine: Ser-1069, Ser-1144, Ser-1146, Ser-1160, Ser-1172, Ser-1190, Ser-1200, Ser-1203, Ser-1209, Ser-1218, Ser-1221, and Ser-1264. Positions 1131–1146 are enriched in basic and acidic residues; sequence KPQKDEVLRYPDRSLS. A compositionally biased stretch (polar residues) spans 1154-1169; that stretch reads SVLSVPSPDTANQEPT. Composition is skewed to polar residues over residues 1211-1224 and 1264-1278; these read DVSSKQLSPESLGT and SPPTDGTTRYSAQTD. The segment covering 1289–1299 has biased composition (low complexity); sequence PASSFSHSTPS. Ser-1326, Ser-1329, Ser-1544, Ser-1600, and Ser-1626 each carry phosphoserine. Basic and acidic residues-rich tracts occupy residues 1338–1548 and 1586–1605; these read IAIK…EKKD and QEDKTRKPKMLEEKSPEKVK. The segment covering 1632–1642 has biased composition (basic and acidic residues); it reads RAREQEEKYWR. 3 disordered regions span residues 1632–1684, 1713–1879, and 1892–2673; these read RARE…RYWR, DGQG…FSWG, and EGAA…LVNG. At Ser-1654 the chain carries Phosphoserine. Residues 1655–1666 are compositionally biased toward basic and acidic residues; the sequence is PTREEPAGEQKE. A phosphoserine mark is found at Ser-1675, Ser-1749, Ser-1762, Ser-1776, Ser-1791, Ser-1797, Ser-1801, Ser-1812, and Ser-1818. The segment covering 1852–1867 has biased composition (pro residues); it reads LPPAPLSPAPGPPTPA. Basic and acidic residues predominate over residues 1907 to 1929; the sequence is KDYRKAEGEREEEGRAEAPDKSS. Ser-1931 carries the phosphoserine modification. Basic and acidic residues predominate over residues 1951–1964; the sequence is PEQREPTPYPDERS. At Thr-1957 the chain carries Phosphothreonine. The segment covering 2019–2033 has biased composition (polar residues); sequence SPISPKSLQSDTPTF. Residue Ser-2022 is modified to Phosphoserine. Positions 2042–2066 are enriched in pro residues; sequence TVPPRPEPGPSMEPSLTPPAVPPRA. Thr-2058 is subject to Phosphothreonine. Ser-2074, Ser-2104, Ser-2106, and Ser-2108 each carry phosphoserine. Residues 2086–2122 show a composition bias toward basic and acidic residues; that stretch reads PDRRSPSPKESGRSHWDDSTSDSELEKGAREQPEKEA. The span at 2175–2184 shows a compositional bias: pro residues; sequence PAPPQLPSPA. Phosphoserine occurs at positions 2235, 2252, 2256, 2259, and 2260. Polar residues predominate over residues 2257 to 2268; it reads EGSSSEATTPVI. A compositionally biased stretch (low complexity) spans 2312–2325; that stretch reads ASLDLALAPAPSLP. Ser-2449 carries the post-translational modification Phosphoserine. Over residues 2461 to 2473 the composition is skewed to basic and acidic residues; that stretch reads IDDRDLSTEEVRL. Residues 2502-2514 show a composition bias toward low complexity; sequence SASDSGSSQSDSD. Residues 2559–2575 are compositionally biased toward pro residues; that stretch reads DPPPLPQPDPRPSPPRP. The span at 2590 to 2602 shows a compositional bias: basic and acidic residues; it reads GRVERLREKEKVQ. A phosphoserine mark is found at Ser-2649 and Ser-2664.

The protein belongs to the MAP1 family. In terms of assembly, 3 different light chains, LC1 (a cleavage product of MAP1B), LC2 (a cleavage product of MAP1A) and LC3 (produced by one of the MAP1LC3 genes), can associate with the MAP1A or MAP1B heavy chains. Interacts with TIAM2. Interacts with guanylate kinase-like domain of DLG1, DLG2 and DLG4. Binds to CSNK1D. Interacts with ELAVL4. In terms of processing, phosphorylated by CSNK1D. LC2 is generated from MAP1A by proteolytic processing. Brain.

It is found in the cytoplasm. It localises to the cytoskeleton. Functionally, structural protein involved in the filamentous cross-bridging between microtubules and other skeletal elements. The sequence is that of Microtubule-associated protein 1A (MAP1A) from Homo sapiens (Human).